The primary structure comprises 58 residues: Leucine zipper protein 6 (58 aa).

As to expression, widely expressed, highest levels found in brain, placenta, spleen, testis, and ovary. Up-regulated in some tumor cells.

This Homo sapiens (Human) protein is Leucine zipper protein 6 (LUZP6).